Reading from the N-terminus, the 118-residue chain is Large ribosomal subunit protein bL20 (118 aa).

The protein belongs to the bacterial ribosomal protein bL20 family.

Its function is as follows. Binds directly to 23S ribosomal RNA and is necessary for the in vitro assembly process of the 50S ribosomal subunit. It is not involved in the protein synthesizing functions of that subunit. This chain is Large ribosomal subunit protein bL20, found in Synechococcus sp. (strain JA-2-3B'a(2-13)) (Cyanobacteria bacterium Yellowstone B-Prime).